We begin with the raw amino-acid sequence, 67 residues long: Inosine/xanthosine triphosphatase (67 aa).

Belongs to the YjjX NTPase family. As to quaternary structure, homodimer. The cofactor is Mg(2+). Requires Mn(2+) as cofactor.

The catalysed reaction is XTP + H2O = XDP + phosphate + H(+). It carries out the reaction ITP + H2O = IDP + phosphate + H(+). Phosphatase that hydrolyzes non-canonical purine nucleotides such as XTP and ITP to their respective diphosphate derivatives. Probably excludes non-canonical purines from DNA/RNA precursor pool, thus preventing their incorporation into DNA/RNA and avoiding chromosomal lesions. The sequence is that of Inosine/xanthosine triphosphatase from Enterobacter cloacae.